A 289-amino-acid polypeptide reads, in one-letter code: Glycine--tRNA ligase alpha subunit (289 aa).

The protein belongs to the class-II aminoacyl-tRNA synthetase family. As to quaternary structure, tetramer of two alpha and two beta subunits.

It localises to the cytoplasm. The catalysed reaction is tRNA(Gly) + glycine + ATP = glycyl-tRNA(Gly) + AMP + diphosphate. This chain is Glycine--tRNA ligase alpha subunit, found in Rickettsia akari (strain Hartford).